Reading from the N-terminus, the 608-residue chain is Glutamine--fructose-6-phosphate aminotransferase [isomerizing] (608 aa).

Cysteine 2 functions as the Nucleophile; for GATase activity in the catalytic mechanism. Positions 2–217 (CGIVGYSGKK…DKEFVVLTSE (216 aa)) constitute a Glutamine amidotransferase type-2 domain. SIS domains lie at 285–424 (TKEQ…NKNT) and 453–598 (KVQK…VDKP). The active-site For Fru-6P isomerization activity is the lysine 603.

Homodimer.

It is found in the cytoplasm. It catalyses the reaction D-fructose 6-phosphate + L-glutamine = D-glucosamine 6-phosphate + L-glutamate. Catalyzes the first step in hexosamine metabolism, converting fructose-6P into glucosamine-6P using glutamine as a nitrogen source. This Clostridium acetobutylicum (strain ATCC 824 / DSM 792 / JCM 1419 / IAM 19013 / LMG 5710 / NBRC 13948 / NRRL B-527 / VKM B-1787 / 2291 / W) protein is Glutamine--fructose-6-phosphate aminotransferase [isomerizing].